Consider the following 359-residue polypeptide: MGSAQNERIPSLTRWYIDTRQLTVTNPSLPLLEALQPSDQEAVKRFYHLRDRHMSLASNLLKYLFIHRSCCIPWNKISISRTPDPHRRPCFIPSPALTEATDEPIPGIEFNVSHQASLVALAGTIIPQSHGASPNPTTVFANPSPSSVPAPSVPQVGIDITCVDERHARTSSAPSTRDQLAGYVDIFAEVFSSRELDTIKNLGGRFPADAQDGEAVEYGLRLFYTYWALKEAYIKMTGEALLAPWLRELEFTDVIAPEPAPAPGQGSAENWGEPYTGVKIWLYGKRVEDVRIEVVAFETGYIFATAARGAGLGAESRPLSRDAGVAVSVDRWMHMEKIDIDRDIAPCATGVCQCTKKQP.

It belongs to the P-Pant transferase superfamily.

It carries out the reaction apo-[ACP] + CoA = holo-[ACP] + adenosine 3',5'-bisphosphate + H(+). With respect to regulation, activity is inhibited bythe antifunfal copmpounds PD 404,182, 6-nitroso-1,2-benzopyrone, and calmidazolium chloride with IC(50) values of 3.9 uM, 35.2 uM, and 19.2 uM, respectively. Functionally, acyl-carrier-protein synthase that transfers the 4'-phosphopantetheine moiety from coenzyme A to a Ser of an acyl-carrier-protein. The 4'-phosphopantetheine (4'-PPT) portion of CoA provides the essential prosthetic group for a number of carrier proteins and multi-domain enzymes, priming them for the acceptance of acyl building blocks in fatty acid synthesis and many aspects of secondary metabolism mediated by polyketide synthases (PKSs) and non-ribosomal peptide synthetases (NRPSs). PptA is able to transfer the cofactor to a broad range of enzymes with acyl- or peptidyl-carrier protein domains and activates target enzymes involved in the synthesis of lysine, but also secondary metabolites including gliotoxin, fumigaclavine C, fumiquinazole A, fumiquinazoline C, pyripyroprene A, fumagillin, the siderophores triacetylfusarinine C (TAFC) and ferricrocin (FC), and dihydroxy naphthalene (DHN)-melanin. Plays an essential role in virulence. The sequence is that of 4'-phosphopantetheinyl transferase A from Aspergillus fumigatus (strain ATCC MYA-4609 / CBS 101355 / FGSC A1100 / Af293) (Neosartorya fumigata).